The sequence spans 492 residues: Ketol-acid reductoisomerase (NADP(+)) (492 aa).

A KARI N-terminal Rossmann domain is found at 14–208 (LDQLGKCRFM…GGHRAGVLQS (195 aa)). NADP(+) is bound by residues 45–48 (CGAQ), Arg68, Arg76, Ser78, and 108–110 (DKQ). His132 is a catalytic residue. Gly158 is a binding site for NADP(+). 2 KARI C-terminal knotted domains span residues 209 to 344 (SFVA…NAPQ) and 345 to 485 (FDGK…MKDM). Residues Asp217, Glu221, Glu389, and Glu393 each contribute to the Mg(2+) site. Residue Ser414 participates in substrate binding.

It belongs to the ketol-acid reductoisomerase family. Requires Mg(2+) as cofactor.

The enzyme catalyses (2R)-2,3-dihydroxy-3-methylbutanoate + NADP(+) = (2S)-2-acetolactate + NADPH + H(+). The catalysed reaction is (2R,3R)-2,3-dihydroxy-3-methylpentanoate + NADP(+) = (S)-2-ethyl-2-hydroxy-3-oxobutanoate + NADPH + H(+). The protein operates within amino-acid biosynthesis; L-isoleucine biosynthesis; L-isoleucine from 2-oxobutanoate: step 2/4. It participates in amino-acid biosynthesis; L-valine biosynthesis; L-valine from pyruvate: step 2/4. In terms of biological role, involved in the biosynthesis of branched-chain amino acids (BCAA). Catalyzes an alkyl-migration followed by a ketol-acid reduction of (S)-2-acetolactate (S2AL) to yield (R)-2,3-dihydroxy-isovalerate. In the isomerase reaction, S2AL is rearranged via a Mg-dependent methyl migration to produce 3-hydroxy-3-methyl-2-ketobutyrate (HMKB). In the reductase reaction, this 2-ketoacid undergoes a metal-dependent reduction by NADPH to yield (R)-2,3-dihydroxy-isovalerate. This is Ketol-acid reductoisomerase (NADP(+)) from Pectobacterium carotovorum subsp. carotovorum (strain PC1).